We begin with the raw amino-acid sequence, 923 residues long: Phosphoenolpyruvate carboxylase (923 aa).

Catalysis depends on residues His149 and Lys585.

It belongs to the PEPCase type 1 family. Requires Mg(2+) as cofactor.

The enzyme catalyses oxaloacetate + phosphate = phosphoenolpyruvate + hydrogencarbonate. Its function is as follows. Forms oxaloacetate, a four-carbon dicarboxylic acid source for the tricarboxylic acid cycle. The chain is Phosphoenolpyruvate carboxylase from Nocardia farcinica (strain IFM 10152).